The following is a 380-amino-acid chain: Cytochrome b (380 aa).

A run of 4 helical transmembrane segments spans residues 33–53 (FGSLLGLCLAIQLLTGLFLAM), 77–98 (WLIRNMHANGASFFFICIYLHI), 113–133 (WNVGVVLLLLVMMTAFVGYVL), and 178–198 (FFAFHFLLPFVIAAATLLHLL). Residues H83 and H97 each coordinate heme b. Heme b is bound by residues H182 and H196. Residue H201 coordinates a ubiquinone. Helical transmembrane passes span 226–246 (YKDLLGFIVLFLALASLALFS), 288–308 (LGGVLALLASILILMLVPILH), 320–340 (FSQIIFWTLVADVAILTWIGG), and 347–367 (YIIIGQIASALYFLIFLVFFP).

It belongs to the cytochrome b family. The cytochrome bc1 complex contains 3 respiratory subunits (MT-CYB, CYC1 and UQCRFS1), 2 core proteins (UQCRC1 and UQCRC2) and probably 6 low-molecular weight proteins. The cofactor is heme b.

It is found in the mitochondrion inner membrane. Functionally, component of the ubiquinol-cytochrome c reductase complex (complex III or cytochrome b-c1 complex) that is part of the mitochondrial respiratory chain. The b-c1 complex mediates electron transfer from ubiquinol to cytochrome c. Contributes to the generation of a proton gradient across the mitochondrial membrane that is then used for ATP synthesis. This Apogon semilineatus (Half-lined cardinal) protein is Cytochrome b (mt-cyb).